Reading from the N-terminus, the 504-residue chain is Sodium-coupled neutral amino acid symporter 2 (504 aa).

A disordered region spans residues 1–22 (MKKTEMGRFNISPDEDSSSYSS). At 1-76 (MKKTEMGRFN…HPGTTSFGMS (76 aa)) the chain is on the cytoplasmic side. The regulates protein turnover upon amino acid deprivation stretch occupies residues 1–96 (MKKTEMGRFN…SGILGLSYAM (96 aa)). 4 positions are modified to phosphoserine: Ser-12, Ser-21, Ser-22, and Ser-55. Residues 77 to 96 (VFNLSNAIVGSGILGLSYAM) traverse the membrane as a helical segment. Asn-82 is a Na(+) binding site. The Extracellular segment spans residues 97–102 (ANTGIA). The chain crosses the membrane as a helical span at residues 103-123 (LFIILLTFVSIFSLYSVHLLL). Residues 124–158 (KTANEGGSLLYEQLGHKAYGLAGKLAASGSITMQN) are Cytoplasmic-facing. Residues 159-177 (IGAMSSYLFIVKYELPLVI) form a helical membrane-spanning segment. At 178-188 (KALMNIEDTNG) the chain is on the extracellular side. Residues 189 to 209 (LWYLNGDYLVLLVSFVLILPL) form a helical membrane-spanning segment. The Cytoplasmic portion of the chain corresponds to 210–217 (SLLRNLGY). The helical transmembrane segment at 218-238 (LGYTSGLSLLCMIFFLIVVIC) threads the bilayer. Residues 239–290 (KKFQIPCPVEVALMANETVNGTFTQVALAALASNSTAADTCRPRYFIFNSQT) lie on the Extracellular side of the membrane. Cys-245 and Cys-279 form a disulfide bridge. N-linked (GlcNAc...) asparagine glycans are attached at residues Asn-254, Asn-258, and Asn-272. A helical membrane pass occupies residues 291–311 (VYAVPILTFSFVCHPAVLPIY). At 312–327 (EELKSRSRRRMMNVSK) the chain is on the cytoplasmic side. A helical transmembrane segment spans residues 328 to 348 (ISFFAMFLMYLLAALFGYLTF). At 349–369 (YEHVESELLHTYSAIVGTDIL) the chain is on the extracellular side. A helical membrane pass occupies residues 370-390 (LLVVRLAVLVAVTLTVPVVIF). Residue Thr-384 participates in Na(+) binding. Over 391 to 411 (PIRSSVTHLLCPTKEFSWFRH) the chain is Cytoplasmic. A helical membrane pass occupies residues 412-432 (SVITVTILAFTNLLVIFVPTI). Over 433–434 (RD) the chain is Extracellular. The helical transmembrane segment at 435–455 (IFGFIGASAAAMLIFILPSAF) threads the bilayer. Residues 456–470 (YIKLVKKEPMRSVQK) are Cytoplasmic-facing. The chain crosses the membrane as a helical span at residues 471 to 493 (IGALCFLLSGVVVMIGSMGLIVL). Residues 494-504 (DWVHDASAGGH) are Extracellular-facing.

This sequence belongs to the amino acid/polyamine transporter 2 family. In terms of processing, polyubiquitination by NEDD4L regulates the degradation and the activity of SLC38A2. In terms of tissue distribution, widely expressed. Expressed in skeletal muscle and adipose tissue (at protein level). Expressed by glutamatergic and GABAergic neurons together with astrocytes and other non-neuronal cells in the cerebral cortex (at protein level). Widely expressed in the central nervous systeme where, it is enriched in the spinal cord and the brainstem nuclei, especially those of the auditory system.

Its subcellular location is the cell membrane. It carries out the reaction L-alanine(in) + Na(+)(in) = L-alanine(out) + Na(+)(out). The catalysed reaction is glycine(in) + Na(+)(in) = glycine(out) + Na(+)(out). It catalyses the reaction L-serine(in) + Na(+)(in) = L-serine(out) + Na(+)(out). The enzyme catalyses L-proline(in) + Na(+)(in) = L-proline(out) + Na(+)(out). It carries out the reaction L-methionine(in) + Na(+)(in) = L-methionine(out) + Na(+)(out). The catalysed reaction is L-histidine(in) + Na(+)(in) = L-histidine(out) + Na(+)(out). It catalyses the reaction L-asparagine(in) + Na(+)(in) = L-asparagine(out) + Na(+)(out). The enzyme catalyses L-glutamine(in) + Na(+)(in) = L-glutamine(out) + Na(+)(out). It carries out the reaction L-threonine(in) + Na(+)(in) = L-threonine(out) + Na(+)(out). The catalysed reaction is L-leucine(in) + Na(+)(in) = L-leucine(out) + Na(+)(out). It catalyses the reaction L-phenylalanine(in) + Na(+)(in) = L-phenylalanine(out) + Na(+)(out). With respect to regulation, inhibited by N-methyl-D-glucamine. Inhibited by choline. Allosteric regulation of sodium ions binding by pH. In terms of biological role, symporter that cotransports neutral amino acids and sodium ions from the extracellular to the intracellular side of the cell membrane. The transport is pH-sensitive, Li(+)-intolerant, electrogenic, driven by the Na(+) electrochemical gradient and cotransports of neutral amino acids and sodium ions with a stoichiometry of 1:1. May function in the transport of amino acids at the blood-brain barrier. May function in the transport of amino acids in the supply of maternal nutrients to the fetus through the placenta. Maintains a key metabolic glutamine/glutamate balance underpinning retrograde signaling by dendritic release of the neurotransmitter glutamate. Transports L-proline in differentiating osteoblasts for the efficient synthesis of proline-enriched proteins and provides proline essential for osteoblast differentiation and bone formation during bone development. This is Sodium-coupled neutral amino acid symporter 2 from Rattus norvegicus (Rat).